We begin with the raw amino-acid sequence, 310 residues long: Ribosomal RNA small subunit methyltransferase H (310 aa).

S-adenosyl-L-methionine contacts are provided by residues 33–35 (GGH), Asp52, Phe79, Asp98, and Gln105.

This sequence belongs to the methyltransferase superfamily. RsmH family.

The protein resides in the cytoplasm. The enzyme catalyses cytidine(1402) in 16S rRNA + S-adenosyl-L-methionine = N(4)-methylcytidine(1402) in 16S rRNA + S-adenosyl-L-homocysteine + H(+). In terms of biological role, specifically methylates the N4 position of cytidine in position 1402 (C1402) of 16S rRNA. This Campylobacter jejuni subsp. jejuni serotype O:23/36 (strain 81-176) protein is Ribosomal RNA small subunit methyltransferase H.